Here is a 407-residue protein sequence, read N- to C-terminus: MFKYILKRLGLAVVAMFIVMSIVFFLVNATGNVPLSATSARDIAAVQAQLQEFGFNDPIIVRYFRYWAKLFSFQADALGIYYANPNQTIGEIVFARVPNTLYVVLISFLIGSLLGIFLGMVSGLNRGKFLDAAINVLVVLFVSIPSFVVGLGLLKLAGFLNLPPRFINFDDAFFSFDRFLLASIIPILSLVFYSSAAFTYRIRNEVVEVMNQDYIKTAKSKGLGMFAVARYHIFRNSIIPSIPLFVFGISGAFSGGFIIESLFGVQGVSRILIDSVQVNETNMVMFNILFIQGIPLLASVFIEFIYVLVDPRIRIANSSNVSLLTKLKFLSSRHQWLMKWNKINSDNAQNIVFNSPLHHQLLELNAIDYKTKTVQLTTEQKTALNISATANFILLGNKCLKLKTIHG.

The next 6 helical transmembrane spans lie at 9-29, 101-121, 134-154, 179-199, 238-258, and 288-308; these read LGLA…LVNA, LYVV…LGMV, INVL…LGLL, FLLA…AAFT, IIPS…GGFI, and ILFI…IYVL. The 211-residue stretch at 97–307 folds into the ABC transmembrane type-1 domain; that stretch reads VPNTLYVVLI…ASVFIEFIYV (211 aa).

It belongs to the binding-protein-dependent transport system permease family. OppBC subfamily. In terms of assembly, the complex is composed of two ATP-binding proteins (OppD and OppF), two transmembrane proteins (OppB and OppC) and a solute-binding protein (OppA).

The protein localises to the cell membrane. Functionally, part of the ABC transporter complex OppABCDF involved in the uptake of oligopeptides. Probably responsible for the translocation of the substrate across the membrane. This chain is Oligopeptide transport system permease protein OppB (oppB), found in Mycoplasma genitalium (strain ATCC 33530 / DSM 19775 / NCTC 10195 / G37) (Mycoplasmoides genitalium).